The sequence spans 116 residues: Large ribosomal subunit protein bL17 (116 aa).

This sequence belongs to the bacterial ribosomal protein bL17 family. Part of the 50S ribosomal subunit. Contacts protein L32.

This chain is Large ribosomal subunit protein bL17, found in Microcystis aeruginosa (strain NIES-843 / IAM M-2473).